A 149-amino-acid polypeptide reads, in one-letter code: Calmodulin (149 aa).

EF-hand domains follow at residues 8–43, 44–79, 81–116, and 117–149; these read EQIA…LGQN, PTEA…KMAD, DTEE…LGEK, and LSDE…MLSK. The Ca(2+) site is built by Asp-21, Asp-23, Asp-25, Asn-27, Glu-32, Asp-57, Asp-59, Asn-61, Thr-63, Glu-68, Asp-94, Asp-96, Asn-98, and Glu-105. N6,N6,N6-trimethyllysine is present on Lys-116. Ca(2+) contacts are provided by Asp-130, Asp-132, Asp-134, Gln-136, and Glu-141.

It belongs to the calmodulin family.

Functionally, calmodulin mediates the control of a large number of enzymes, ion channels and other proteins by Ca(2+). Among the enzymes to be stimulated by the calmodulin-Ca(2+) complex are a number of protein kinases and phosphatases. The polypeptide is Calmodulin (Physarum polycephalum (Slime mold)).